A 142-amino-acid chain; its full sequence is Ribosome-binding factor A (142 aa).

This sequence belongs to the RbfA family. In terms of assembly, monomer. Binds 30S ribosomal subunits, but not 50S ribosomal subunits or 70S ribosomes.

The protein resides in the cytoplasm. Functionally, one of several proteins that assist in the late maturation steps of the functional core of the 30S ribosomal subunit. Associates with free 30S ribosomal subunits (but not with 30S subunits that are part of 70S ribosomes or polysomes). Required for efficient processing of 16S rRNA. May interact with the 5'-terminal helix region of 16S rRNA. The protein is Ribosome-binding factor A of Leifsonia xyli subsp. xyli (strain CTCB07).